The following is a 475-amino-acid chain: Putative aldehyde dehydrogenase (475 aa).

NAD(+) is bound by residues 146 to 147 (WN) and 223 to 224 (GS). Glu245 (proton acceptor) is an active-site residue. Leu246 lines the NAD(+) pocket. Cys279 (nucleophile) is an active-site residue. Residue Glu379 participates in NAD(+) binding.

This sequence belongs to the aldehyde dehydrogenase family.

The enzyme catalyses an aldehyde + NAD(+) + H2O = a carboxylate + NADH + 2 H(+). The chain is Putative aldehyde dehydrogenase from Staphylococcus aureus (strain USA300).